A 228-amino-acid polypeptide reads, in one-letter code: 2,3-bisphosphoglycerate-dependent phosphoglycerate mutase (228 aa).

Substrate is bound by residues 8–15, 21–22, Arg-58, 111–114, Lys-122, 138–139, and 182–183; these read RHGQSVWN, SG, ERMY, RR, and GN. His-9 serves as the catalytic Tele-phosphohistidine intermediate. Catalysis depends on Glu-111, which acts as the Proton donor/acceptor.

Belongs to the phosphoglycerate mutase family. BPG-dependent PGAM subfamily.

The enzyme catalyses (2R)-2-phosphoglycerate = (2R)-3-phosphoglycerate. The protein operates within carbohydrate degradation; glycolysis; pyruvate from D-glyceraldehyde 3-phosphate: step 3/5. Its function is as follows. Catalyzes the interconversion of 2-phosphoglycerate and 3-phosphoglycerate. The polypeptide is 2,3-bisphosphoglycerate-dependent phosphoglycerate mutase (Chlamydia pneumoniae (Chlamydophila pneumoniae)).